A 207-amino-acid polypeptide reads, in one-letter code: Cytochrome c biogenesis ATP-binding export protein CcmA (207 aa).

One can recognise an ABC transporter domain in the interval 2 to 204 (LEVKNLTAIR…NPKLRKIRLG (203 aa)). An ATP-binding site is contributed by 34–41 (GRNGTGKT).

This sequence belongs to the ABC transporter superfamily. CcmA exporter (TC 3.A.1.107) family. As to quaternary structure, the complex is composed of two ATP-binding proteins (CcmA) and two transmembrane proteins (CcmB).

It localises to the cell inner membrane. The enzyme catalyses heme b(in) + ATP + H2O = heme b(out) + ADP + phosphate + H(+). In terms of biological role, part of the ABC transporter complex CcmAB involved in the biogenesis of c-type cytochromes; once thought to export heme, this seems not to be the case, but its exact role is uncertain. Responsible for energy coupling to the transport system. The chain is Cytochrome c biogenesis ATP-binding export protein CcmA from Vibrio cholerae serotype O1 (strain ATCC 39315 / El Tor Inaba N16961).